An 89-amino-acid chain; its full sequence is Small ribosomal subunit protein uS15 (89 aa).

Positions 1–18 (MSLDTAEKQKLIENHQVH) are enriched in basic and acidic residues. The segment at 1–23 (MSLDTAEKQKLIENHQVHPTDTG) is disordered.

The protein belongs to the universal ribosomal protein uS15 family. In terms of assembly, part of the 30S ribosomal subunit. Forms a bridge to the 50S subunit in the 70S ribosome, contacting the 23S rRNA.

Functionally, one of the primary rRNA binding proteins, it binds directly to 16S rRNA where it helps nucleate assembly of the platform of the 30S subunit by binding and bridging several RNA helices of the 16S rRNA. In terms of biological role, forms an intersubunit bridge (bridge B4) with the 23S rRNA of the 50S subunit in the ribosome. This Prochlorococcus marinus (strain MIT 9301) protein is Small ribosomal subunit protein uS15.